The following is a 378-amino-acid chain: Homoserine O-acetyltransferase (378 aa).

Residues 52-337 enclose the AB hydrolase-1 domain; the sequence is NAILICHALT…YSQHGHDTFL (286 aa). Catalysis depends on S148, which acts as the Nucleophile. Substrate is bound at residue R217. Catalysis depends on residues D304 and H333. D334 contributes to the substrate binding site.

It belongs to the AB hydrolase superfamily. MetX family. Homodimer.

It is found in the cytoplasm. It carries out the reaction L-homoserine + acetyl-CoA = O-acetyl-L-homoserine + CoA. It functions in the pathway amino-acid biosynthesis; L-methionine biosynthesis via de novo pathway; O-acetyl-L-homoserine from L-homoserine: step 1/1. In terms of biological role, transfers an acetyl group from acetyl-CoA to L-homoserine, forming acetyl-L-homoserine. The polypeptide is Homoserine O-acetyltransferase (Chloroherpeton thalassium (strain ATCC 35110 / GB-78)).